A 20-amino-acid chain; its full sequence is Cathepsin L1 (20 aa).

The span at alanine 1 to glutamate 10 shows a compositional bias: basic and acidic residues. The disordered stretch occupies residues alanine 1–glutamine 20.

This sequence belongs to the peptidase C1 family. As to quaternary structure, dimer of a heavy and a light chain linked by disulfide bonds.

The protein localises to the lysosome. The catalysed reaction is Specificity close to that of papain. As compared to cathepsin B, cathepsin L exhibits higher activity toward protein substrates, but has little activity on Z-Arg-Arg-NHMec, and no peptidyl-dipeptidase activity.. Its function is as follows. Thiol protease that assists the parasite in burrowing through the gut wall and liver of its mammalian host. In Fasciola hepatica (Liver fluke), this protein is Cathepsin L1.